Here is a 521-residue protein sequence, read N- to C-terminus: GMP synthase [glutamine-hydrolyzing] (521 aa).

Residues 8–203 enclose the Glutamine amidotransferase type-1 domain; sequence KILILDFGAQ…VVDICGCQTL (196 aa). The active-site Nucleophile is cysteine 85. Catalysis depends on residues histidine 177 and glutamate 179. In terms of domain architecture, GMPS ATP-PPase spans 204 to 396; the sequence is WTAANIIDDQ…LGLPRTMVYR (193 aa). Residue 231–237 participates in ATP binding; it reads SGGVDSS.

As to quaternary structure, homodimer.

The enzyme catalyses XMP + L-glutamine + ATP + H2O = GMP + L-glutamate + AMP + diphosphate + 2 H(+). Its pathway is purine metabolism; GMP biosynthesis; GMP from XMP (L-Gln route): step 1/1. In terms of biological role, catalyzes the synthesis of GMP from XMP. The sequence is that of GMP synthase [glutamine-hydrolyzing] from Xanthomonas oryzae pv. oryzae (strain MAFF 311018).